Here is a 245-residue protein sequence, read N- to C-terminus: ATP synthase subunit b (245 aa).

Residues 3–23 traverse the membrane as a helical segment; that stretch reads SFNLLTIVSSIVNLLALAWII.

Belongs to the ATPase B chain family. As to quaternary structure, F-type ATPases have 2 components, F(1) - the catalytic core - and F(0) - the membrane proton channel. F(1) has five subunits: alpha(3), beta(3), gamma(1), delta(1), epsilon(1). F(0) has three main subunits: a(1), b(2) and c(10-14). The alpha and beta chains form an alternating ring which encloses part of the gamma chain. F(1) is attached to F(0) by a central stalk formed by the gamma and epsilon chains, while a peripheral stalk is formed by the delta and b chains.

The protein localises to the cell inner membrane. In terms of biological role, f(1)F(0) ATP synthase produces ATP from ADP in the presence of a proton or sodium gradient. F-type ATPases consist of two structural domains, F(1) containing the extramembraneous catalytic core and F(0) containing the membrane proton channel, linked together by a central stalk and a peripheral stalk. During catalysis, ATP synthesis in the catalytic domain of F(1) is coupled via a rotary mechanism of the central stalk subunits to proton translocation. Component of the F(0) channel, it forms part of the peripheral stalk, linking F(1) to F(0). The protein is ATP synthase subunit b of Dictyoglomus thermophilum (strain ATCC 35947 / DSM 3960 / H-6-12).